A 118-amino-acid polypeptide reads, in one-letter code: Large ribosomal subunit protein uL18 (118 aa).

Belongs to the universal ribosomal protein uL18 family. As to quaternary structure, part of the 50S ribosomal subunit; part of the 5S rRNA/L5/L18/L25 subcomplex. Contacts the 5S and 23S rRNAs.

Functionally, this is one of the proteins that bind and probably mediate the attachment of the 5S RNA into the large ribosomal subunit, where it forms part of the central protuberance. This is Large ribosomal subunit protein uL18 from Helicobacter pylori (strain P12).